The sequence spans 159 residues: Transcriptional repressor NrdR (159 aa).

Residues methionine 1–aspartate 21 are disordered. A zinc finger spans residues cysteine 3–cysteine 34. Residues leucine 49–glutamate 139 enclose the ATP-cone domain.

It belongs to the NrdR family. Zn(2+) serves as cofactor.

In terms of biological role, negatively regulates transcription of bacterial ribonucleotide reductase nrd genes and operons by binding to NrdR-boxes. The polypeptide is Transcriptional repressor NrdR (Streptococcus thermophilus (strain CNRZ 1066)).